A 62-amino-acid chain; its full sequence is Large ribosomal subunit protein uL30 (62 aa).

It belongs to the universal ribosomal protein uL30 family. As to quaternary structure, part of the 50S ribosomal subunit.

The chain is Large ribosomal subunit protein uL30 from Nitrosospira multiformis (strain ATCC 25196 / NCIMB 11849 / C 71).